We begin with the raw amino-acid sequence, 339 residues long: Uroporphyrinogen decarboxylase (339 aa).

Substrate-binding positions include 23 to 27 (RQAGR), D72, Y147, S202, and H315.

This sequence belongs to the uroporphyrinogen decarboxylase family. Homodimer.

The protein localises to the cytoplasm. It catalyses the reaction uroporphyrinogen III + 4 H(+) = coproporphyrinogen III + 4 CO2. It functions in the pathway porphyrin-containing compound metabolism; protoporphyrin-IX biosynthesis; coproporphyrinogen-III from 5-aminolevulinate: step 4/4. Its function is as follows. Catalyzes the decarboxylation of four acetate groups of uroporphyrinogen-III to yield coproporphyrinogen-III. The sequence is that of Uroporphyrinogen decarboxylase from Desulfotalea psychrophila (strain LSv54 / DSM 12343).